The following is a 68-amino-acid chain: Alpha-conotoxin-like Ca1.2 (68 aa).

Residues 1–21 (MGMRMMFTVFLLVVLATTVVS) form the signal peptide. The propeptide occupies 22-48 (FTSDRASEGRNAAAKDKASDLVALTVR). Disulfide bonds link Cys50–Cys56 and Cys51–Cys64. Positions 52 to 54 (AIR) are lacks the Ser-Xaa-Pro motif that is crucial for potent interaction with nAChR. Residue Tyr63 is modified to Sulfotyrosine. Cysteine amide is present on Cys64. Positions 65 to 68 (GGIY) are excised as a propeptide.

Belongs to the conotoxin A superfamily. Expressed by the venom duct.

It localises to the secreted. Its function is as follows. Alpha-conotoxins act on postsynaptic membranes, they bind to the nicotinic acetylcholine receptors (nAChR) and thus inhibit them. Has possibly a distinct nAChR binding mode from other alpha-conotoxins, due to a different three residue motif (lacks the Ser-Xaa-Pro motif). This is Alpha-conotoxin-like Ca1.2 from Conus caracteristicus (Characteristic cone).